The sequence spans 84 residues: Sec-independent protein translocase protein TatA (84 aa).

Residues 4–24 (MSPVHWLILAVVLLVVFGGGG) form a helical membrane-spanning segment. A disordered region spans residues 46 to 84 (DDESMTATDATQAPGHISPPNQNPGYSQTTSSETHRNQV). Residues 64 to 77 (PPNQNPGYSQTTSS) are compositionally biased toward polar residues.

Belongs to the TatA/E family. In terms of assembly, the Tat system comprises two distinct complexes: a TatABC complex, containing multiple copies of TatA, TatB and TatC subunits, and a separate TatA complex, containing only TatA subunits. Substrates initially bind to the TatABC complex, which probably triggers association of the separate TatA complex to form the active translocon.

The protein localises to the cell inner membrane. Part of the twin-arginine translocation (Tat) system that transports large folded proteins containing a characteristic twin-arginine motif in their signal peptide across membranes. TatA could form the protein-conducting channel of the Tat system. The polypeptide is Sec-independent protein translocase protein TatA (Gluconobacter oxydans (strain 621H) (Gluconobacter suboxydans)).